Consider the following 553-residue polypeptide: Undecaprenyl phosphate-alpha-4-amino-4-deoxy-L-arabinose arabinosyl transferase 2 (553 aa).

12 consecutive transmembrane segments (helical) span residues 6 to 26 (ASKI…LFPL), 85 to 105 (FAVR…IYLL), 115 to 135 (VAFV…VGTY), 137 to 157 (VLDP…FWAL), 178 to 198 (MAFM…MIPV), 208 to 228 (MLLY…PWVL), 261 to 281 (FWYY…LLPG), 295 to 315 (ELFF…IAKG), 317 to 337 (LPTY…KYGV), 352 to 372 (GYIN…IQLV), 386 to 406 (WVLA…CSTL), and 410 to 430 (HWLW…QAIP).

The protein belongs to the glycosyltransferase 83 family.

It localises to the cell inner membrane. The catalysed reaction is 4-amino-4-deoxy-alpha-L-arabinopyranosyl di-trans,octa-cis-undecaprenyl phosphate + lipid IVA = lipid IIA + di-trans,octa-cis-undecaprenyl phosphate.. It participates in lipopolysaccharide metabolism; 4-amino-4-deoxy-beta-L-arabinose-lipid A biosynthesis. Its function is as follows. Catalyzes the transfer of the L-Ara4N moiety of the glycolipid undecaprenyl phosphate-alpha-L-Ara4N to lipid A. The modified arabinose is attached to lipid A and is required for resistance to polymyxin and cationic antimicrobial peptides. This Proteus mirabilis (strain HI4320) protein is Undecaprenyl phosphate-alpha-4-amino-4-deoxy-L-arabinose arabinosyl transferase 2.